Reading from the N-terminus, the 471-residue chain is MSACLRWWSRKFDCEKEYAEAYKQYSKTGKPYATRLKNNDHGIVLPLNSTKEWRTLPHDQLSFLHALSEFADLYMHINMTDRTPLQAVHYCNNTKTLSRFNRLMVDATDRALPLIVGKDTESEWKRANAFHTILSLCSTVAMSVLLGPEFSMDTSLIQTIMMYNTAIMPSCAKRTSYPRILRPFVWRLSPLCRAMKSDLTKTKIKLTPEIKHRIDIARSKKGWLEEGPMSLLDGLIETAFEKGCLSRSSDRGDDDQQVALLAEEIIFYHFELSTPVAFFIIFAVYVIMNNKEYSTPLREEISEALKLSGGSFTLDTLNHAPKLASFVKETCRFFRRVMKPIHLESINLSLKPGTIIMAPGRDVHLDPDYYDNPTTFNGYRFYDASRGTCTPHISTTSPTFLTFSHGISACPARVLATQITRTIFIMFLLKFDVELAHEEMPAYGFANGPAYLPNPSVMMRVRPCQKDVLGV.

Residues 265–285 form a helical membrane-spanning segment; the sequence is IIFYHFELSTPVAFFIIFAVY. Cys-410 is a heme binding site.

It belongs to the cytochrome P450 family. The cofactor is heme.

The protein localises to the membrane. It participates in secondary metabolite biosynthesis. Its function is as follows. Cytochrome P450 monooxygenase; part of the gene cluster that mediates the biosynthesis of aflavarin, a bicoumarin that exhibits anti-insectan activity against the fungivorous beetle C.hemipterus. The polypeptide is Cytochrome P450 monooxygenase afvE (Aspergillus flavus (strain ATCC 200026 / FGSC A1120 / IAM 13836 / NRRL 3357 / JCM 12722 / SRRC 167)).